The primary structure comprises 130 residues: Small ribosomal subunit protein uS8 (130 aa).

The protein belongs to the universal ribosomal protein uS8 family. As to quaternary structure, part of the 30S ribosomal subunit.

Functionally, one of the primary rRNA binding proteins, it binds directly to 16S rRNA central domain where it helps coordinate assembly of the platform of the 30S subunit. This chain is Small ribosomal subunit protein uS8, found in Halorubrum lacusprofundi (strain ATCC 49239 / DSM 5036 / JCM 8891 / ACAM 34).